Consider the following 651-residue polypeptide: Beta-glucuronidase (651 aa).

The N-terminal stretch at 1-22 (MARGSAVAWAAFGPLLWGCALG) is a signal peptide. N-linked (GlcNAc...) asparagine glycans are attached at residues Asn-173, Asn-190, Asn-272, and Asn-420. Glu-451 (proton donor) is an active-site residue. Asn-631 is a glycosylation site (N-linked (GlcNAc...) asparagine).

This sequence belongs to the glycosyl hydrolase 2 family. Homotetramer.

The protein resides in the lysosome. The enzyme catalyses a beta-D-glucuronoside + H2O = D-glucuronate + an alcohol. Inhibited by L-aspartic acid. Its function is as follows. Plays an important role in the degradation of dermatan and keratan sulfates. This chain is Beta-glucuronidase (GUSB), found in Pongo abelii (Sumatran orangutan).